The primary structure comprises 446 residues: Phosphoglucosamine mutase (446 aa).

The active-site Phosphoserine intermediate is the Ser88. Positions 88, 231, 233, and 235 each coordinate Mg(2+). Ser88 carries the phosphoserine modification.

It belongs to the phosphohexose mutase family. Mg(2+) serves as cofactor. Post-translationally, activated by phosphorylation.

The enzyme catalyses alpha-D-glucosamine 1-phosphate = D-glucosamine 6-phosphate. Its function is as follows. Catalyzes the conversion of glucosamine-6-phosphate to glucosamine-1-phosphate. This chain is Phosphoglucosamine mutase, found in Methanococcus vannielii (strain ATCC 35089 / DSM 1224 / JCM 13029 / OCM 148 / SB).